The following is a 1680-amino-acid chain: Alpha-protein kinase 3 (1680 aa).

Positions methionine 1–arginine 37 are disordered. Positions arginine 9 to glycine 21 are enriched in gly residues. The Ig-like 1 domain occupies proline 77–threonine 173. Phosphoserine is present on serine 229. Disordered regions lie at residues serine 237–aspartate 288, glutamate 302–glutamate 759, serine 785–serine 950, glutamate 1078–leucine 1128, and proline 1147–alanine 1244. Residues lysine 320–glutamate 337 are compositionally biased toward basic and acidic residues. The span at serine 339–proline 353 shows a compositional bias: polar residues. The segment covering alanine 402–valine 426 has biased composition (pro residues). Low complexity predominate over residues glutamate 514–leucine 532. Polar residues-rich tracts occupy residues serine 557–lysine 566 and glutamate 731–serine 744. Residues serine 785–glycine 796 are compositionally biased toward basic and acidic residues. A compositionally biased stretch (polar residues) spans serine 917–glutamate 932. 2 stretches are compositionally biased toward basic and acidic residues: residues glutamate 1087–threonine 1111 and alanine 1151–serine 1165. At serine 1199 the chain carries Phosphoserine. The span at aspartate 1231–alanine 1244 shows a compositional bias: basic and acidic residues. The 89-residue stretch at proline 1251–serine 1339 folds into the Ig-like 2 domain. Cysteine 1273 and cysteine 1323 are oxidised to a cystine. Residues lysine 1367 to leucine 1600 form the Alpha-type protein kinase domain. The segment at proline 1603–arginine 1680 is disordered. 2 stretches are compositionally biased toward polar residues: residues proline 1639–threonine 1660 and aspartate 1671–arginine 1680.

Belongs to the protein kinase superfamily. Alpha-type protein kinase family. ALPK subfamily. As to expression, expressed in the heart and skeletal muscle of adult mice.

It localises to the nucleus. The catalysed reaction is L-seryl-[protein] + ATP = O-phospho-L-seryl-[protein] + ADP + H(+). It carries out the reaction L-threonyl-[protein] + ATP = O-phospho-L-threonyl-[protein] + ADP + H(+). In terms of biological role, involved in cardiomyocyte differentiation. In Mus musculus (Mouse), this protein is Alpha-protein kinase 3.